We begin with the raw amino-acid sequence, 463 residues long: Quinolone resistance protein NorB (463 aa).

A run of 14 helical transmembrane segments spans residues 17–37 (IGIVLSVITFWLFAQSLVNVV), 53–73 (IAVSITALFSGMFVVGAGGLA), 86–106 (IILNILGSLLIIISNIPLLLI), 107–127 (IGRLIQGLSAACIMPATLSII), 142–162 (YWSIGSWGGSGVCSFFGGAVA), 165–185 (LGWRWIFILSIIISLIALFLI), 201–221 (FDIKGLVLLVIMLLSLNILIT), 230–250 (SLLFITLLAITIGSFSLFIVL), 273–293 (TASNFLLNGVAGTLIVANTFV), 299–319 (YSSLQAGSLSITYLVMVLIMI), 334–354 (PMLIGTGVLIVGECLISLTFL), 357–377 (ILYVICCIIGYLFFGLGLGIY), 403–423 (MASALGGAFGVALSGAVYAIV), and 435–455 (IALWLNAGMGILSFVIILLLV).

The protein belongs to the major facilitator superfamily. TCR/Tet family.

It is found in the cell membrane. In terms of biological role, multidrug efflux pump that acts independently of NorA and is one of the factors that confers resistance against diverse quinolones and chemical compounds. The protein is Quinolone resistance protein NorB (norB) of Staphylococcus aureus (strain MSSA476).